The chain runs to 303 residues: Probable endonuclease 4 (303 aa).

The Zn(2+) site is built by His78, His118, Glu154, Asp188, His191, His222, Asp235, His237, and Glu267.

This sequence belongs to the AP endonuclease 2 family. Requires Zn(2+) as cofactor.

It catalyses the reaction Endonucleolytic cleavage to 5'-phosphooligonucleotide end-products.. In terms of biological role, endonuclease IV plays a role in DNA repair. It cleaves phosphodiester bonds at apurinic or apyrimidinic (AP) sites, generating a 3'-hydroxyl group and a 5'-terminal sugar phosphate. The chain is Probable endonuclease 4 from Mycoplasmoides gallisepticum (strain R(low / passage 15 / clone 2)) (Mycoplasma gallisepticum).